A 128-amino-acid chain; its full sequence is UPF0102 protein Rfer_3873 (128 aa).

A compositionally biased stretch (polar residues) spans 1-15 (MAIPQIKTQVGTSKQ). Residues 1–20 (MAIPQIKTQVGTSKQAGDAA) are disordered.

This sequence belongs to the UPF0102 family.

The sequence is that of UPF0102 protein Rfer_3873 from Albidiferax ferrireducens (strain ATCC BAA-621 / DSM 15236 / T118) (Rhodoferax ferrireducens).